Here is a 355-residue protein sequence, read N- to C-terminus: F-box protein At1g31080 (355 aa).

An F-box domain is found at 4–49; the sequence is GANSASIPNDLILEILSRLPAKSTGRFRCVSKLWGSMLCHSYFTEL. The span at 306 to 320 shows a compositional bias: polar residues; it reads AGTSRSPPKQSTSTS. The interval 306-333 is disordered; the sequence is AGTSRSPPKQSTSTSSREDHEVRTLAHQ. The segment covering 321–333 has biased composition (basic and acidic residues); the sequence is SREDHEVRTLAHQ.

This Arabidopsis thaliana (Mouse-ear cress) protein is F-box protein At1g31080.